Consider the following 456-residue polypeptide: RuvB-like helicase 1 (456 aa).

71-78 contacts ATP; sequence GGAGTGKT.

The protein belongs to the RuvB family. In terms of assembly, may form heterododecamers with RVB2. Component of the SWR1 chromatin remodeling complex, the INO80 chromatin remodeling complex, and of the R2TP complex.

It is found in the nucleus. The enzyme catalyses ATP + H2O = ADP + phosphate + H(+). Functionally, DNA helicase which participates in several chromatin remodeling complexes, including the SWR1 and the INO80 complexes. The SWR1 complex mediates the ATP-dependent exchange of histone H2A for the H2A variant HZT1 leading to transcriptional regulation of selected genes by chromatin remodeling. The INO80 complex remodels chromatin by shifting nucleosomes and is involved in DNA repair. Also involved in pre-rRNA processing. The sequence is that of RuvB-like helicase 1 (rvb1) from Schizosaccharomyces pombe (strain 972 / ATCC 24843) (Fission yeast).